The chain runs to 291 residues: MVSVPGPVSLIEPLSGNTILVIKINALHVVKRSKYQEIIIADTEDFGRALILDEYIQSSYYDEAYYHESLVHPAMVTHISPRDVLILGGGEGATLREALKHSTVKRAVMVDIDEDVVELSKKYLPQMHQGVFEDPRAQVVIEDGFVYVEKALKNGDKFDVVIMDLTDPYSSEIAKQLYSPEFFKKLVGLLREDGIIVTQAGNSFFFPEAYDMVLHGVKSSFPVVAEYNVWIPSFGYAVNYIIGSLKYDPTSLTAEEVEKRLKERGVKTLFYSGKTHVGLMNLPIYRKIRHV.

The 241-residue stretch at 5–245 (PGPVSLIEPL…YAVNYIIGSL (241 aa)) folds into the PABS domain. An S-methyl-5'-thioadenosine-binding site is contributed by Q36. Residues H67 and E91 each contribute to the spermidine site. S-methyl-5'-thioadenosine-binding positions include D111 and 143–144 (DG). The active-site Proton acceptor is the D164.

It belongs to the spermidine/spermine synthase family. In terms of assembly, homodimer or homotetramer.

Its subcellular location is the cytoplasm. The enzyme catalyses S-adenosyl 3-(methylsulfanyl)propylamine + putrescine = S-methyl-5'-thioadenosine + spermidine + H(+). Its pathway is amine and polyamine biosynthesis; spermidine biosynthesis; spermidine from putrescine: step 1/1. Functionally, catalyzes the irreversible transfer of a propylamine group from the amino donor S-adenosylmethioninamine (decarboxy-AdoMet) to putrescine (1,4-diaminobutane) to yield spermidine. The protein is Polyamine aminopropyltransferase of Pyrobaculum islandicum (strain DSM 4184 / JCM 9189 / GEO3).